The sequence spans 1203 residues: MVLLLILSVLLLKEDVRGSAQSSERRVVAHMPGDIIIGALFSVHHQPTVDKVHERKCGAVREQYGIQRVEAMLHTLERINSDPTLLPNITLGCEIRDSCWHSAVALEQSIEFIRDSLISSEEEEGLVRCVDGSSSFRSKKPIVGVIGPGSSSVAIQVQNLLQLFNIPQIAYSATSMDLSDKTLFKYFMRVVPSDAQQARAMVDIVKRYNWTYVSAVHTEGNYGESGMEAFKDMSAKEGICIAHSYKIYSNAGEQSFDKLLKKLRSHLPKARVVACFCEGMTVRGLLMAMRRLGLAGEFLLLGSDGWADRYDVTDGYQREAVGGITIKLQSPDVKWFDDYYLKLRPETNLRNPWFQEFWQHRFQCRLEGFAQENSKYNKTCNSSLTLRTHHVQDSKMGFVINAIYSMAYGLHNMQMSLCPGYAGLCDAMKPIDGRKLLDSLMKTNFTGVSGDMILFDENGDSPGRYEIMNFKEMGKDYFDYINVGSWDNGELKMDDDEVWSKKNNIIRSVCSEPCEKGQIKVIRKGEVSCCWTCTPCKENEYVFDEYTCKACQLGSWPTDDLTGCDLIPVQYLRWGDPEPIAAVVFACLGLLATLFVTVIFIIYRDTPVVKSSSRELCYIILAGICLGYLCTFCLIAKPKQIYCYLQRIGIGLSPAMSYSALVTKTNRIARILAGSKKKICTKKPRFMSACAQLVIAFILICIQLGIIVALFIMEPPDIMHDYPSIREVYLICNTTNLGVVTPLGYNGLLILSCTFYAFKTRNVPANFNEAKYIAFTMYTTCIIWLAFVPIYFGSNYKIITMCFSVSLSATVALGCMFVPKVYIILAKPERNVRSAFTTSTVVRMHVGDGKSSSAASRSSSLVNLWKRRGSSGETLRYKDRRLAQHKSEIECFTPKGSMGNGGRATMSSSNGKSVTWAQNEKSTRGQHLWQRLSVHINKKENPNQTAVIKPFPKSTESRGQGAGAGGGSGPGAAGAGSAGCTATGGPEPPDAGPKALYDVAEAEERFPAAARPRSPSPISTLSHLAGSAGRTDDDAPSLHSETAARSSSSQGSLMEQISSVVTRFTANITELNSMMLSTAAAPGPPGTPICSSYLIPKEIQLPTTMTTFAEIQPLPAIEVTGGAQPATGPSPAQETPAGAEAAPGKPDLEELVALTPPSPFRDSVDSGSTTPNSPVSESALCIPSSPKYDTLIIRDYTQSSSSL.

An N-terminal signal peptide occupies residues Met-1–Gly-18. The Extracellular portion of the chain corresponds to Ser-19 to Pro-579. Residues Cys-57 and Cys-99 are joined by a disulfide bond. Tyr-64 contacts L-glutamate. N-linked (GlcNAc...) asparagine glycosylation occurs at Asn-88. Residues Ser-151 and Ser-172–Thr-174 contribute to the L-glutamate site. Asn-209 is a glycosylation site (N-linked (GlcNAc...) asparagine). Tyr-222 is a binding site for L-glutamate. 8 disulfides stabilise this stretch: Cys-240–Cys-529, Cys-275–Cys-277, Cys-364–Cys-380, Cys-418–Cys-425, Cys-510–Cys-530, Cys-514–Cys-533, Cys-536–Cys-548, and Cys-551–Cys-564. Position 304 (Asp-304) interacts with L-glutamate. 2 N-linked (GlcNAc...) asparagine glycosylation sites follow: Asn-377 and Asn-381. Lys-395 is a binding site for L-glutamate. Residue Asn-444 is glycosylated (N-linked (GlcNAc...) asparagine). The helical transmembrane segment at Ile-580 to Ile-602 threads the bilayer. The Cytoplasmic segment spans residues Tyr-603 to Ser-612. The helical transmembrane segment at Ser-613–Ile-635 threads the bilayer. Residues Ala-636 to Cys-643 lie on the Extracellular side of the membrane. A disulfide bridge links Cys-643 with Cys-732. The chain crosses the membrane as a helical span at residues Tyr-644–Asn-666. The Cytoplasmic segment spans residues Arg-667 to Gln-692. Residues Leu-693 to Met-713 form a helical membrane-spanning segment. The Extracellular portion of the chain corresponds to Glu-714–Asn-736. Asn-733 carries an N-linked (GlcNAc...) asparagine glycan. The chain crosses the membrane as a helical span at residues Leu-737–Phe-758. Residues Lys-759–Lys-771 lie on the Cytoplasmic side of the membrane. A helical membrane pass occupies residues Tyr-772–Ser-794. The Extracellular portion of the chain corresponds to Asn-795–Lys-797. The helical transmembrane segment at Ile-798–Pro-819 threads the bilayer. At Lys-820–Leu-1203 the chain is on the cytoplasmic side. Ser-860 bears the Phosphoserine mark. The residue at position 868 (Arg-868) is an Omega-N-methylarginine. Disordered regions lie at residues Phe-892–Met-1054 and Thr-1120–Ile-1182. The span at Thr-905–Glu-920 shows a compositional bias: polar residues. Arg-924 carries the omega-N-methylarginine modification. A compositionally biased stretch (gly residues) spans Gln-960–Ser-977. Residues Pro-1007–Ser-1019 are compositionally biased toward low complexity. Ser-1014 and Ser-1016 each carry phosphoserine. Polar residues-rich tracts occupy residues His-1039–Met-1054 and Asp-1165–Ser-1176.

This sequence belongs to the G-protein coupled receptor 3 family. In terms of assembly, the PPXXF motif binds HOMER1, HOMER2 and HOMER3. Interacts with RYR1, RYR2, ITPR1, SHANK1 and SHANK3. Interacts with SIAH1 and TAMALIN. Interacts with NCDN. Interacts with NECAB2. Interacts with CAMK2A.

Its subcellular location is the cell membrane. G-protein coupled receptor for glutamate. Ligand binding causes a conformation change that triggers signaling via guanine nucleotide-binding proteins (G proteins) and modulates the activity of down-stream effectors. Signaling activates a phosphatidylinositol-calcium second messenger system and generates a calcium-activated chloride current. Plays an important role in the regulation of synaptic plasticity and the modulation of the neural network activity. In Mus musculus (Mouse), this protein is Metabotropic glutamate receptor 5 (Grm5).